The following is a 2748-amino-acid chain: Chalcone synthase cfoA (2748 aa).

The adenylation (A) domain stretch occupies residues arginine 13–lysine 511. In terms of domain architecture, Carrier 1 spans aspartate 535–leucine 620. Serine 579 carries the post-translational modification O-(pantetheine 4'-phosphoryl)serine. The region spanning valine 641 to glutamine 1073 is the Ketosynthase family 3 (KS3) domain. Catalysis depends on for beta-ketoacyl synthase activity residues cysteine 813, histidine 948, and histidine 995. The region spanning phenylalanine 1196–leucine 1489 is the Malonyl-CoA:ACP transacylase (MAT) domain. The dehydratase (DH) domain stretch occupies residues leucine 1561 to aspartate 1842. Residues histidine 1563–asparagine 1707 are N-terminal hotdog fold. Residues histidine 1563–glycine 1866 enclose the PKS/mFAS DH domain. Catalysis depends on histidine 1595, which acts as the Proton acceptor; for dehydratase activity. The interval alanine 1722–glycine 1866 is C-terminal hotdog fold. Catalysis depends on aspartate 1784, which acts as the Proton donor; for dehydratase activity. The Ketoreductase (KR) domain maps to glycine 2031–alanine 2210. One can recognise a Carrier 2 domain in the interval asparagine 2305–isoleucine 2383. The residue at position 2342 (serine 2342) is an O-(pantetheine 4'-phosphoryl)serine. The interval glutamate 2386–alanine 2426 is disordered. The span at aspartate 2396–serine 2407 shows a compositional bias: low complexity. The thioester reductase (TE) domain stretch occupies residues valine 2519 to alanine 2742.

The protein in the N-terminal section; belongs to the NRP synthetase family. Pantetheine 4'-phosphate serves as cofactor.

The protein operates within secondary metabolite biosynthesis; flavonoid biosynthesis. Hybrid PKS-NRPS synthetase; part of the gene cluster that mediates the biosynthesis of chlorflavonin, a fungal flavonoid with acetolactate synthase inhibitory activity. Within the pathway, the PKS-NRPS cfoA, is responsible for the generation of the key precursor chalcone. The adenylation (A) domain activates benzoic acid or p-hydroxybenzoic acid which are transferred to the thiol group of the pantetheinyl residue of the T domain, and further transferred to the adjacent PKS portion of cfoA. Within the PKS portion of cfoA, benzoic acid or p-hydroxybenzoic acid act as starter units for respectively four malonyl-CoA molecules for elongation by the AT and KS domains. Afterwards, chalcone is cyclized through Claisen condensation and thereby released either spontaneously or catalyzed by the TE domain. Then, a new type of chalcone isomerase, cfoK, catalyzes the conversion of the chalcone into a flavanone by a histidine-mediated oxa-Michael addition mechanism. The desaturation of flavanone to flavone is catalyzed by a new type of flavone synthase, the flavin mononucleotide (FMN)-dependent oxidoreductase cfoJ. Monooxygenases cfoF, cfoG, and P450 cfoH are responsible for the hydroxylation of the flavonoid skeleton at sites C3, C8, and C2', respectively. Like cfoF, the dehydratase cfoI plays also a role in the hydroxylation of position C3. Methyltransferases cfoB, cfoC, and cfoD then catalyze the methylation of C7-OH, C8-OH, and C3-OH, respectively. Finally, the monooxygenase cfoE is responsible for the chlorination of flavonoid at position C3'. This chain is Chalcone synthase cfoA, found in Aspergillus candidus.